We begin with the raw amino-acid sequence, 247 residues long: Sortase A (247 aa).

At 1 to 9 (MRNKKKLHG) the chain is on the cytoplasmic side. The chain crosses the membrane as a helical span at residues 10–30 (FFNFVRWLLVVLLIIVGLALV). The Extracellular portion of the chain corresponds to 31–247 (FNKPIRNAFI…FSKKYNQINL (217 aa)). Histidine 140 functions as the Proton donor/acceptor in the catalytic mechanism. Cysteine 206 (acyl-thioester intermediate) is an active-site residue.

It belongs to the bacterial sortase family. Class A subfamily.

It is found in the cell membrane. Its function is as follows. Transpeptidase that anchors surface proteins to the cell wall. Recognizes and modifies its substrate by proteolytic cleavage of a C-terminal sorting signal. Following cleavage, a covalent intermediate is formed via a thioester bond between the sortase and its substrate, which is then transferred and covalently attached to the cell wall. This sortase recognizes a Leu-Pro-x-Thr-Gly (LPXTG) motif, which is cleaved by the sortase between the threonine and glycine residues. Essential for adherence to eukaryotic cells and for binding to fibronectin and fibrinogen. This chain is Sortase A, found in Streptococcus agalactiae serotype III (strain NEM316).